Reading from the N-terminus, the 231-residue chain is Ureidoacrylate amidohydrolase RutB (231 aa).

Catalysis depends on D25, which acts as the Proton acceptor. K134 is an active-site residue. Residue C167 is the Nucleophile of the active site.

This sequence belongs to the isochorismatase family. RutB subfamily.

The enzyme catalyses (Z)-3-ureidoacrylate + H2O + H(+) = (Z)-3-aminoacrylate + NH4(+) + CO2. The catalysed reaction is (Z)-3-ureidoacrylate + H2O = (Z)-3-aminoacrylate + carbamate + H(+). It carries out the reaction (Z)-2-methylureidoacrylate + H2O + H(+) = (Z)-2-methylaminoacrylate + NH4(+) + CO2. Hydrolyzes ureidoacrylate to form aminoacrylate and carbamate. The carbamate hydrolyzes spontaneously, thereby releasing one of the nitrogen atoms of the pyrimidine ring as ammonia and one of its carbon atoms as CO2. The sequence is that of Ureidoacrylate amidohydrolase RutB from Escherichia coli O18:K1:H7 (strain IHE3034 / ExPEC).